A 641-amino-acid polypeptide reads, in one-letter code: Ribosomal oxygenase 1 (641 aa).

The residue at position 1 (methionine 1) is an N-acetylmethionine. Disordered stretches follow at residues 1-35 (MDGLQASAGPLRRGRPKRRRKPQPHSGSVLALPLR) and 54-80 (RTQTLPSENSEESRVESTADDLGDALP). Basic residues predominate over residues 12-23 (RRGRPKRRRKPQ). A phosphoserine mark is found at serine 60, serine 63, and serine 109. Positions 294-439 (CSLRLLCPQA…DFLEAILPLA (146 aa)) constitute a JmjC domain. Fe cation is bound by residues histidine 340, aspartate 342, and histidine 405.

This sequence belongs to the ROX family. NO66 subfamily. Interacts with SP7/OSX; the interaction is direct. Interacts with MYC. Interacts with PHF19; leading to its recruitment to H3K36me3 sites. The cofactor is Fe(2+). In terms of tissue distribution, widely expressed. Overexpressed in lung carcinomas.

The protein localises to the nucleus. Its subcellular location is the nucleolus. The protein resides in the nucleoplasm. The enzyme catalyses N(6),N(6)-dimethyl-L-lysyl(36)-[histone H3] + 2 2-oxoglutarate + 2 O2 = L-lysyl(36)-[histone H3] + 2 formaldehyde + 2 succinate + 2 CO2. The catalysed reaction is N(6)-methyl-L-lysyl-[protein] + 2-oxoglutarate + O2 = L-lysyl-[protein] + formaldehyde + succinate + CO2. It catalyses the reaction L-histidyl-[protein] + 2-oxoglutarate + O2 = (3S)-3-hydroxy-L-histidyl-[protein] + succinate + CO2. Its function is as follows. Oxygenase that can act as both a histone lysine demethylase and a ribosomal histidine hydroxylase. Specifically demethylates 'Lys-4' (H3K4me) and 'Lys-36' (H3K36me) of histone H3, thereby playing a central role in histone code. Preferentially demethylates trimethylated H3 'Lys-4' (H3K4me3) and monomethylated H3 'Lys-4' (H3K4me1) residues, while it has weaker activity for dimethylated H3 'Lys-36' (H3K36me2). Acts as a regulator of osteoblast differentiation via its interaction with SP7/OSX by demethylating H3K4me and H3K36me, thereby inhibiting SP7/OSX-mediated promoter activation. Also catalyzes demethylation of non-histone proteins, such as CGAS: demethylation of monomethylated CGAS promotes interaction between CGAS and PARP1, followed by PARP1 inactivation. Also catalyzes the hydroxylation of 60S ribosomal protein L8 on 'His-216', thereby playing a role in ribosome biogenesis. Participates in MYC-induced transcriptional activation. The protein is Ribosomal oxygenase 1 of Homo sapiens (Human).